The following is a 493-amino-acid chain: Probable mannosyl-oligosaccharide alpha-1,2-mannosidase 1B (493 aa).

The signal sequence occupies residues 1–18 (MHLPSLSVALALVSSSLA). Residues asparagine 87 and asparagine 174 are each glycosylated (N-linked (GlcNAc...) asparagine). Residues cysteine 324 and cysteine 353 are joined by a disulfide bond. Glutamate 367 acts as the Proton donor in catalysis. Asparagine 489 is a glycosylation site (N-linked (GlcNAc...) asparagine).

Belongs to the glycosyl hydrolase 47 family. Monomer. The cofactor is Ca(2+). Mg(2+) serves as cofactor.

It localises to the cytoplasmic vesicle lumen. It carries out the reaction N(4)-(alpha-D-Man-(1-&gt;2)-alpha-D-Man-(1-&gt;2)-alpha-D-Man-(1-&gt;3)-[alpha-D-Man-(1-&gt;2)-alpha-D-Man-(1-&gt;3)-[alpha-D-Man-(1-&gt;2)-alpha-D-Man-(1-&gt;6)]-alpha-D-Man-(1-&gt;6)]-beta-D-Man-(1-&gt;4)-beta-D-GlcNAc-(1-&gt;4)-beta-D-GlcNAc)-L-asparaginyl-[protein] (N-glucan mannose isomer 9A1,2,3B1,2,3) + 4 H2O = N(4)-(alpha-D-Man-(1-&gt;3)-[alpha-D-Man-(1-&gt;3)-[alpha-D-Man-(1-&gt;6)]-alpha-D-Man-(1-&gt;6)]-beta-D-Man-(1-&gt;4)-beta-D-GlcNAc-(1-&gt;4)-beta-D-GlcNAc)-L-asparaginyl-[protein] (N-glucan mannose isomer 5A1,2) + 4 beta-D-mannose. The catalysed reaction is N(4)-(alpha-D-Man-(1-&gt;2)-alpha-D-Man-(1-&gt;2)-alpha-D-Man-(1-&gt;3)-[alpha-D-Man-(1-&gt;3)-[alpha-D-Man-(1-&gt;2)-alpha-D-Man-(1-&gt;6)]-alpha-D-Man-(1-&gt;6)]-beta-D-Man-(1-&gt;4)-beta-D-GlcNAc-(1-&gt;4)-beta-D-GlcNAc)-L-asparaginyl-[protein] (N-glucan mannose isomer 8A1,2,3B1,3) + 3 H2O = N(4)-(alpha-D-Man-(1-&gt;3)-[alpha-D-Man-(1-&gt;3)-[alpha-D-Man-(1-&gt;6)]-alpha-D-Man-(1-&gt;6)]-beta-D-Man-(1-&gt;4)-beta-D-GlcNAc-(1-&gt;4)-beta-D-GlcNAc)-L-asparaginyl-[protein] (N-glucan mannose isomer 5A1,2) + 3 beta-D-mannose. Its pathway is protein modification; protein glycosylation. In terms of biological role, involved in the maturation of Asn-linked oligosaccharides. Progressively trims alpha-1,2-linked mannose residues from Man(9)GlcNAc(2) to produce Man(5)GlcNAc(2). The polypeptide is Probable mannosyl-oligosaccharide alpha-1,2-mannosidase 1B (mns1B) (Neosartorya fischeri (strain ATCC 1020 / DSM 3700 / CBS 544.65 / FGSC A1164 / JCM 1740 / NRRL 181 / WB 181) (Aspergillus fischerianus)).